The following is a 269-amino-acid chain: LOB domain-containing protein 6 (269 aa).

In terms of domain architecture, LOB spans 37 to 138; sequence SPCAACKFLR…QDLARAKFEL (102 aa).

It belongs to the LOB domain-containing protein family.

The protein resides in the nucleus. Its function is as follows. Negative regulator of cell proliferation in the adaxial side of leaves. Regulates the formation of a symmetric lamina and the establishment of venation. The chain is LOB domain-containing protein 6 (LBD6) from Oryza sativa subsp. indica (Rice).